The primary structure comprises 317 residues: MKNGIAFRTIGEEFDGFLLIKESTRGTTSNGKPFLTLILRDASGEIEAKLWDATKDDEETLIPEQIIQVTGEINQFRGKHQLKILSIRLSQPMDNVQVTDFLGKAPMEKEELAEKLTEAIFEMENPKIQRLVRAFIKKYQEELLTYPAATKNHHEFASGLAYHVVSMLAIGKELHKLYPEINRDLLYAGIILHDIGKIKELSGVVSTTYTLEGKMLGHIPMMVEEIGLMANELQIEGEEVLILKHLVLSHHGKAEWGSPTPPLVREAELLHLIDLIDAKMNMLGRALEKIQPGEFTERLFAMDNRAFYKPNFEENEG.

The segment at residues 17 to 90 is a DNA-binding region (OB); that stretch reads FLLIKESTRG…QLKILSIRLS (74 aa). In terms of domain architecture, HD spans 163 to 279; that stretch reads HVVSMLAIGK…LHLIDLIDAK (117 aa).

This sequence belongs to the YhaM family.

Shows a 3'-5' exoribonuclease activity. This chain is 3'-5' exoribonuclease YhaM, found in Oceanobacillus iheyensis (strain DSM 14371 / CIP 107618 / JCM 11309 / KCTC 3954 / HTE831).